Consider the following 652-residue polypeptide: Acetyl-coenzyme A synthetase (652 aa).

CoA is bound by residues 189–192 and Ser311; that span reads RGGK. ATP-binding positions include 387 to 389, 411 to 416, Asp500, and Arg515; these read GEP and DTWWQT. Ser523 contacts CoA. Arg526 provides a ligand contact to ATP. Val537, His539, and Ile542 together coordinate Mg(2+). Lys584 is a CoA binding site. Lys609 is modified (N6-acetyllysine).

The protein belongs to the ATP-dependent AMP-binding enzyme family. Requires Mg(2+) as cofactor. Acetylated. Deacetylation by the SIR2-homolog deacetylase activates the enzyme.

It catalyses the reaction acetate + ATP + CoA = acetyl-CoA + AMP + diphosphate. Its function is as follows. Catalyzes the conversion of acetate into acetyl-CoA (AcCoA), an essential intermediate at the junction of anabolic and catabolic pathways. AcsA undergoes a two-step reaction. In the first half reaction, AcsA combines acetate with ATP to form acetyl-adenylate (AcAMP) intermediate. In the second half reaction, it can then transfer the acetyl group from AcAMP to the sulfhydryl group of CoA, forming the product AcCoA. The chain is Acetyl-coenzyme A synthetase from Bartonella quintana (strain Toulouse) (Rochalimaea quintana).